The sequence spans 340 residues: MYSLIRPLLMRMDAERSHEFSLAWMDRLARLGLGRLLCGHRLPDMPRRVMGLTFANPVGLAAGLDKNGEHLEALGHVGFGFIEVGTVTPRPQPGNPEPRLFRLPAHEAIINRMGFNNQGVDALVQRLRVTRYQGVLGVNIGKNKDTPTERATDDYLSCLQKVYPYADYVAVNVSSPNTPGLRDLQGGELLEALLGRLTHLRGVLAREYGRYVPLVVKIAPDMDEAQRAHFCQQVLRYGIDGVAATNTTLSRDGVEDDPLAREQGGLSGAPLRPRAQAVLEELGQRLGHRVPLIGVGGIMSGADAQARMAAGADLLQIYSGFIYRGPLLLEELLKAVAPEH.

FMN-binding positions include 62-66 (AGLDK) and T86. K66 is a substrate binding site. 111–115 (NRMGF) provides a ligand contact to substrate. N139 and N172 together coordinate FMN. Position 172 (N172) interacts with substrate. The active-site Nucleophile is S175. Substrate is bound at residue N177. K217 and T245 together coordinate FMN. 246–247 (NT) is a binding site for substrate. FMN-binding positions include G268, G297, and 318–319 (YS).

The protein belongs to the dihydroorotate dehydrogenase family. Type 2 subfamily. Monomer. FMN is required as a cofactor.

Its subcellular location is the cell membrane. The enzyme catalyses (S)-dihydroorotate + a quinone = orotate + a quinol. It functions in the pathway pyrimidine metabolism; UMP biosynthesis via de novo pathway; orotate from (S)-dihydroorotate (quinone route): step 1/1. Its function is as follows. Catalyzes the conversion of dihydroorotate to orotate with quinone as electron acceptor. In Alkalilimnicola ehrlichii (strain ATCC BAA-1101 / DSM 17681 / MLHE-1), this protein is Dihydroorotate dehydrogenase (quinone).